The primary structure comprises 154 residues: Lipoprotein signal peptidase (154 aa).

Transmembrane regions (helical) follow at residues 8 to 28 (AFFLISVACFLADYYSKYWAL), 36 to 56 (IVVNTYMNFILAFNHGAAFSF), 66 to 86 (WLFAGFAGIVALWLIMTLLTK), and 88 to 108 (HHWLMSVSYACILGGAVGNLY). Catalysis depends on residues D118 and D136. Residues 129 to 149 (WPVFNLADVAITLGVILMLIA) traverse the membrane as a helical segment.

It belongs to the peptidase A8 family.

The protein resides in the cell inner membrane. It catalyses the reaction Release of signal peptides from bacterial membrane prolipoproteins. Hydrolyzes -Xaa-Yaa-Zaa-|-(S,diacylglyceryl)Cys-, in which Xaa is hydrophobic (preferably Leu), and Yaa (Ala or Ser) and Zaa (Gly or Ala) have small, neutral side chains.. The protein operates within protein modification; lipoprotein biosynthesis (signal peptide cleavage). This protein specifically catalyzes the removal of signal peptides from prolipoproteins. In Dichelobacter nodosus (strain VCS1703A), this protein is Lipoprotein signal peptidase.